The primary structure comprises 72 residues: DNA-directed RNA polymerase subunit omega (72 aa).

It belongs to the RNA polymerase subunit omega family. In terms of assembly, the RNAP catalytic core consists of 2 alpha, 1 beta, 1 beta' and 1 omega subunit. When a sigma factor is associated with the core the holoenzyme is formed, which can initiate transcription.

It catalyses the reaction RNA(n) + a ribonucleoside 5'-triphosphate = RNA(n+1) + diphosphate. Its function is as follows. Promotes RNA polymerase assembly. Latches the N- and C-terminal regions of the beta' subunit thereby facilitating its interaction with the beta and alpha subunits. The sequence is that of DNA-directed RNA polymerase subunit omega from Limosilactobacillus reuteri (strain DSM 20016) (Lactobacillus reuteri).